A 212-amino-acid chain; its full sequence is Metalloproteinase inhibitor 3 (212 aa).

An N-terminal signal peptide occupies residues 1–24 (MTAWLGFLAVFLCSWSLRDLVAEA). Residue C25 coordinates Zn(2+). 2 involved in metalloproteinase-binding regions span residues 25 to 28 (CTCV) and 89 to 90 (ES). 6 disulfide bridges follow: C25–C92, C27–C119, C37–C144, C146–C193, C151–C156, and C164–C185. In terms of domain architecture, NTR spans 25-144 (CTCVPIHPQD…GLNHRYHLGC (120 aa)).

This sequence belongs to the protease inhibitor I35 (TIMP) family.

The protein localises to the secreted. It localises to the extracellular space. The protein resides in the extracellular matrix. In terms of biological role, complexes with metalloproteinases (such as collagenases) and irreversibly inactivates them by binding to their catalytic zinc cofactor. May form part of a tissue-specific acute response to remodeling stimuli. In Gallus gallus (Chicken), this protein is Metalloproteinase inhibitor 3 (TIMP3).